The following is a 295-amino-acid chain: MEDIPDTSRPPLKYVKGIPLIKYFAEALESLQDFQAQPDDLLISTYPKSGTTWVSEILDMIYQDGDVEKCRRAPVFIRVPFLEFKAPGIPTGLEVLKDTPAPRLIKTHLPLALLPQTLLDQKVKVVYVARNAKDVAVSYYHFYRMAKVHPDPDTWDSFLEKFMAGEVSYGSWYQHVQEWWELSHTHPVLYLFYEDMKENPKREIQKILKFVGRSLPEETVDLIVQHTSFKEMKNNSMANYTTLSPDIMDHSISAFMRKGISGDWKTTFTVAQNERFDADYAKKMEGCGLSFRTQL.

Position 48-53 (48-53 (KSGTTW)) interacts with 3'-phosphoadenylyl sulfate. 106 to 108 (KTH) is a binding site for substrate. The active-site Proton acceptor is H108. 3'-phosphoadenylyl sulfate contacts are provided by residues R130, S138, Y193, 227–232 (TSFKEM), and 255–259 (FMRKG). S138 bears the Phosphoserine mark.

This sequence belongs to the sulfotransferase 1 family. Homodimer. Ubiquitously expressed in canine tissues with highest expression in male and female liver.

It localises to the cytoplasm. The catalysed reaction is a phenol + 3'-phosphoadenylyl sulfate = an aryl sulfate + adenosine 3',5'-bisphosphate + H(+). The enzyme catalyses 17beta-estradiol + 3'-phosphoadenylyl sulfate = 17beta-estradiol 3-sulfate + adenosine 3',5'-bisphosphate + H(+). It carries out the reaction 4-ethylphenol + 3'-phosphoadenylyl sulfate = 4-ethylphenyl sulfate + adenosine 3',5'-bisphosphate + H(+). It catalyses the reaction 4-nitrophenol + 3'-phosphoadenylyl sulfate = 4-nitrophenyl sulfate + adenosine 3',5'-bisphosphate. The catalysed reaction is dopamine + 3'-phosphoadenylyl sulfate = dopamine 3-O-sulfate + adenosine 3',5'-bisphosphate + H(+). The enzyme catalyses dopamine + 3'-phosphoadenylyl sulfate = dopamine 4-O-sulfate + adenosine 3',5'-bisphosphate + H(+). It carries out the reaction 3,3',5-triiodo-L-thyronine + 3'-phosphoadenylyl sulfate = 3,3',5-triiodo-L-thyronine sulfate + adenosine 3',5'-bisphosphate + H(+). It catalyses the reaction 3,3',5'-triiodo-L-thyronine + 3'-phosphoadenylyl sulfate = 3,3',5'-triiodo-L-thyronine sulfate + adenosine 3',5'-bisphosphate + H(+). The catalysed reaction is 3,3'-diiodo-L-thyronine + 3'-phosphoadenylyl sulfate = 3,3'-diiodo-L-thyronine sulfate + adenosine 3',5'-bisphosphate + H(+). The enzyme catalyses L-thyroxine + 3'-phosphoadenylyl sulfate = L-thyroxine sulfate + adenosine 3',5'-bisphosphate + H(+). Its function is as follows. Sulfotransferase that utilizes 3'-phospho-5'-adenylyl sulfate (PAPS) as sulfonate donor to catalyze the sulfate conjugation of a wide variety of acceptor molecules bearing a hydroxyl or an amine group. Sulfonation increases the water solubility of most compounds, and therefore their renal excretion, but it can also result in bioactivation to form active metabolites. Displays broad substrate specificity for small phenolic compounds. Plays an important role in the sulfonation of endogenous molecules such as steroid hormones. Mediates also the metabolic activation of carcinogenic N-hydroxyarylamines leading to highly reactive intermediates capable of forming DNA adducts, potentially resulting in mutagenesis. May play a role in gut microbiota-host metabolic interaction. O-sulfonates 4-ethylphenol (4-EP), a dietary tyrosine-derived metabolite produced by gut bacteria. The product 4-EPS crosses the blood-brain barrier and may negatively regulate oligodendrocyte maturation and myelination, affecting the functional connectivity of different brain regions associated with the limbic system. Catalyzes the sulfate conjugation of dopamine. Catalyzes the sulfation of T4 (L-thyroxine/3,5,3',5'-tetraiodothyronine), T3 (3,5,3'-triiodothyronine), rT3 (3,3',5'-triiodothyronine) and 3,3'-T2 (3,3'-diiodothyronine), with a substrate preference of 3,3'-T2 &gt; rT3 &gt; T3 &gt; T4. This Canis lupus familiaris (Dog) protein is Sulfotransferase 1A1 (SULT1A1).